A 274-amino-acid chain; its full sequence is Diaminopimelate epimerase (274 aa).

Asparagine 11, glutamine 44, and asparagine 64 together coordinate substrate. Catalysis depends on cysteine 73, which acts as the Proton donor. Residues 74 to 75, asparagine 157, asparagine 190, and 208 to 209 contribute to the substrate site; these read GN and ER. The active-site Proton acceptor is cysteine 217. 218 to 219 lines the substrate pocket; that stretch reads GS.

The protein belongs to the diaminopimelate epimerase family. Homodimer.

The protein localises to the cytoplasm. It carries out the reaction (2S,6S)-2,6-diaminopimelate = meso-2,6-diaminopimelate. Its pathway is amino-acid biosynthesis; L-lysine biosynthesis via DAP pathway; DL-2,6-diaminopimelate from LL-2,6-diaminopimelate: step 1/1. Catalyzes the stereoinversion of LL-2,6-diaminopimelate (L,L-DAP) to meso-diaminopimelate (meso-DAP), a precursor of L-lysine and an essential component of the bacterial peptidoglycan. This is Diaminopimelate epimerase from Edwardsiella ictaluri (strain 93-146).